The following is a 764-amino-acid chain: Ergosteryl-beta-glucosidase (764 aa).

The active-site Nucleophile is the glutamate 515. The disordered stretch occupies residues 588 to 629; it reads HDTRAKTPTPEPSPASTVASVSTSTSKSGSSQPPSFIKPDNH. Phosphothreonine is present on threonine 594. Residues 601–622 are compositionally biased toward low complexity; the sequence is PASTVASVSTSTSKSGSSQPPS.

Belongs to the glycosyl hydrolase 5 (cellulase A) family.

It is found in the cytoplasm. Its subcellular location is the cytosol. It localises to the vacuole membrane. The catalysed reaction is ergosteryl 3-beta-D-glucoside + H2O = ergosterol + D-glucose. Its function is as follows. Ergosteryl beta-glucosidase involved in the ergosteryl beta-glucoside (EG) catabolic pathway and vacuole formation via hydrolysis of EG to generate glucose. Is also able to hydrolyze cholesteryl beta-glucoside and sitosteryl beta-glucoside to generate glucose; and C6-7-nitro-2,1,3-benzoxadiazole (NBD)-GlcCer to generate C6-NBD-ceramide (Cer). This chain is Ergosteryl-beta-glucosidase, found in Saccharomyces cerevisiae (strain ATCC 204508 / S288c) (Baker's yeast).